Reading from the N-terminus, the 328-residue chain is Beta-ketoacyl-[acyl-carrier-protein] synthase III (328 aa).

Catalysis depends on residues Cys122 and His255. The segment at 256-260 (QANIR) is ACP-binding. Residue Asn285 is part of the active site.

Belongs to the thiolase-like superfamily. FabH family. In terms of assembly, homodimer.

It localises to the cytoplasm. It catalyses the reaction malonyl-[ACP] + acetyl-CoA + H(+) = 3-oxobutanoyl-[ACP] + CO2 + CoA. Its pathway is lipid metabolism; fatty acid biosynthesis. Functionally, catalyzes the condensation reaction of fatty acid synthesis by the addition to an acyl acceptor of two carbons from malonyl-ACP. Catalyzes the first condensation reaction which initiates fatty acid synthesis and may therefore play a role in governing the total rate of fatty acid production. Possesses both acetoacetyl-ACP synthase and acetyl transacylase activities. Its substrate specificity determines the biosynthesis of branched-chain and/or straight-chain of fatty acids. The protein is Beta-ketoacyl-[acyl-carrier-protein] synthase III of Polynucleobacter asymbioticus (strain DSM 18221 / CIP 109841 / QLW-P1DMWA-1) (Polynucleobacter necessarius subsp. asymbioticus).